The chain runs to 66 residues: Large ribosomal subunit protein bL33c (66 aa).

Belongs to the bacterial ribosomal protein bL33 family.

The protein resides in the plastid. Its subcellular location is the chloroplast. In Arabidopsis thaliana (Mouse-ear cress), this protein is Large ribosomal subunit protein bL33c (rpl33).